The chain runs to 80 residues: Exodeoxyribonuclease 7 small subunit (80 aa).

It belongs to the XseB family. As to quaternary structure, heterooligomer composed of large and small subunits.

It is found in the cytoplasm. The enzyme catalyses Exonucleolytic cleavage in either 5'- to 3'- or 3'- to 5'-direction to yield nucleoside 5'-phosphates.. Its function is as follows. Bidirectionally degrades single-stranded DNA into large acid-insoluble oligonucleotides, which are then degraded further into small acid-soluble oligonucleotides. This chain is Exodeoxyribonuclease 7 small subunit, found in Pseudoalteromonas translucida (strain TAC 125).